The sequence spans 315 residues: Mycothiol acetyltransferase (315 aa).

N-acetyltransferase domains are found at residues 8–145 (VETS…LPLD) and 163–315 (VSLR…DATA). Glutamate 39 lines the 1D-myo-inositol 2-(L-cysteinylamino)-2-deoxy-alpha-D-glucopyranoside pocket. Acetyl-CoA-binding positions include 81 to 83 (LVV) and 89 to 94 (HHGVGT). Positions 190, 229, and 243 each coordinate 1D-myo-inositol 2-(L-cysteinylamino)-2-deoxy-alpha-D-glucopyranoside. 247 to 249 (LGV) lines the acetyl-CoA pocket. Tyrosine 281 lines the 1D-myo-inositol 2-(L-cysteinylamino)-2-deoxy-alpha-D-glucopyranoside pocket. Residue 286–291 (NTVAIR) coordinates acetyl-CoA.

This sequence belongs to the acetyltransferase family. MshD subfamily. In terms of assembly, monomer.

It carries out the reaction 1D-myo-inositol 2-(L-cysteinylamino)-2-deoxy-alpha-D-glucopyranoside + acetyl-CoA = mycothiol + CoA + H(+). Functionally, catalyzes the transfer of acetyl from acetyl-CoA to desacetylmycothiol (Cys-GlcN-Ins) to form mycothiol. The protein is Mycothiol acetyltransferase of Sanguibacter keddieii (strain ATCC 51767 / DSM 10542 / NCFB 3025 / ST-74).